The following is a 464-amino-acid chain: tRNA-2-methylthio-N(6)-dimethylallyladenosine synthase (464 aa).

Positions 5–122 constitute an MTTase N-terminal domain; that stretch reads RKLYVKSFGC…LPEMLARVRD (118 aa). Residues C14, C50, C85, C163, C167, and C170 each contribute to the [4Fe-4S] cluster site. Residues 149–383 form the Radical SAM core domain; it reads KKRGPTAFVT…VLEASKTAFD (235 aa). The region spanning 384-446 is the TRAM domain; it reads RACMGRRFDI…PNSLAGQVVD (63 aa).

It belongs to the methylthiotransferase family. MiaB subfamily. As to quaternary structure, monomer. Requires [4Fe-4S] cluster as cofactor.

It is found in the cytoplasm. The catalysed reaction is N(6)-dimethylallyladenosine(37) in tRNA + (sulfur carrier)-SH + AH2 + 2 S-adenosyl-L-methionine = 2-methylsulfanyl-N(6)-dimethylallyladenosine(37) in tRNA + (sulfur carrier)-H + 5'-deoxyadenosine + L-methionine + A + S-adenosyl-L-homocysteine + 2 H(+). Catalyzes the methylthiolation of N6-(dimethylallyl)adenosine (i(6)A), leading to the formation of 2-methylthio-N6-(dimethylallyl)adenosine (ms(2)i(6)A) at position 37 in tRNAs that read codons beginning with uridine. This chain is tRNA-2-methylthio-N(6)-dimethylallyladenosine synthase, found in Azorhizobium caulinodans (strain ATCC 43989 / DSM 5975 / JCM 20966 / LMG 6465 / NBRC 14845 / NCIMB 13405 / ORS 571).